Reading from the N-terminus, the 214-residue chain is Putative glucose-6-phosphate isomerase 1 (214 aa).

His-92, His-94, Glu-101, and His-140 together coordinate Fe cation.

It belongs to the archaeal-type GPI family. In terms of assembly, homodimer. Fe cation serves as cofactor.

Its subcellular location is the cytoplasm. It carries out the reaction alpha-D-glucose 6-phosphate = beta-D-fructose 6-phosphate. It functions in the pathway carbohydrate degradation; glycolysis; D-glyceraldehyde 3-phosphate and glycerone phosphate from D-glucose: step 2/4. The chain is Putative glucose-6-phosphate isomerase 1 (pgiA1) from Rhizobium meliloti (strain 1021) (Ensifer meliloti).